Consider the following 484-residue polypeptide: MTTGVQTLKNYIGGQWVESRSAKTEAVPNPATGEVLAYVPISTREDLDRAVAAAKEAFKTWSKTPVPRRARILFKYQQLLVEHWEELARLVTLENGKSYNEAYGEIQRGIECVEFAAGAPTLMMGRQLPSIATGIESGMYRYPIGVVGGITPFNFPMMVPCWMFPLAIACGNTFVLKPSERTPMLANRLAELFKEAGLPDGVLNIVHGAHDVVNGLLEHPDVKAISFVGSQPVGEYVYKTAAAHGKRVQALTGAKNHSIVMPDADLKVAVREIINAAFGSAGERCMAASVVVAVGDIADELVERLVAAANEIKIGNGLEESVFLGPVIREAHKQRTVNYIELGEKEGAILVRDGRKDAAVQGEGYFIGPTIFDRVTTDMTIWKDEIFAPVLSIVRVSTLDEAIEVANKSPFANGACIYTRDGGNVRKFRDEIDAGMLGVNLGVPAPMAFFPFSGWKNSFYGDLHANGMDGVEFYTRKKMLTARW.

NAD(+) contacts are provided by Phe153, Lys177, Glu180, Arg181, Ser230, and Thr252. The active-site Nucleophile is the Cys285. Glu385 contributes to the NAD(+) binding site.

Belongs to the aldehyde dehydrogenase family. IolA subfamily. In terms of assembly, homotetramer.

It carries out the reaction 3-oxopropanoate + NAD(+) + CoA + H2O = hydrogencarbonate + acetyl-CoA + NADH + H(+). The catalysed reaction is 2-methyl-3-oxopropanoate + NAD(+) + CoA + H2O = propanoyl-CoA + hydrogencarbonate + NADH + H(+). It functions in the pathway polyol metabolism; myo-inositol degradation into acetyl-CoA; acetyl-CoA from myo-inositol: step 7/7. Its function is as follows. Catalyzes the oxidation of malonate semialdehyde (MSA) and methylmalonate semialdehyde (MMSA) into acetyl-CoA and propanoyl-CoA, respectively. Is involved in a myo-inositol catabolic pathway. Bicarbonate, and not CO2, is the end-product of the enzymatic reaction. This Geobacillus thermodenitrificans (strain NG80-2) protein is Malonate-semialdehyde dehydrogenase 1.